The primary structure comprises 170 residues: Non-specific lipid transfer protein GPI-anchored 5 (170 aa).

Positions 1–24 (MKMEMGLVFLTVFMAVMSSTMVSA) are cleaved as a signal peptide. 4 cysteine pairs are disulfide-bonded: Cys28–Cys69, Cys38–Cys53, Cys54–Cys95, and Cys67–Cys105. Asn45, Asn84, Asn124, and Asn130 each carry an N-linked (GlcNAc...) asparagine glycan. The interval 105–148 (CNTGGGGGGSTSDSPAESPNSSGPGNGSKTVPVGEGDGPPSSDG) is disordered. The GPI-anchor amidated serine moiety is linked to residue Ser146. Positions 147–170 (DGSSIKFSFPLIAFFSAVSYMAIF) are cleaved as a propeptide — removed in mature form.

It belongs to the plant LTP family. As to expression, expressed in seedlings, preferentially in the endodermis of hypocotyls and roots, as well as in anthers, sepals and flower tori.

It localises to the cell membrane. In terms of biological role, lipid transfer protein involved in seed and ovule maturation and development, probably by regulating the fatty acids homeostasis during suberin and sporopollenin biosynthesis or deposition. Contributes to pre-invasive defense against some non-host powdery mildew pathogens by preventing the penetration of the epidermal cell wall by the fungal agents (e.g. Blumeria graminis f. sp. hordei (Bgh)). This chain is Non-specific lipid transfer protein GPI-anchored 5, found in Arabidopsis thaliana (Mouse-ear cress).